A 331-amino-acid polypeptide reads, in one-letter code: Phosphate acyltransferase (331 aa).

The protein belongs to the PlsX family. Homodimer. Probably interacts with PlsY.

Its subcellular location is the cytoplasm. It catalyses the reaction a fatty acyl-[ACP] + phosphate = an acyl phosphate + holo-[ACP]. Its pathway is lipid metabolism; phospholipid metabolism. Functionally, catalyzes the reversible formation of acyl-phosphate (acyl-PO(4)) from acyl-[acyl-carrier-protein] (acyl-ACP). This enzyme utilizes acyl-ACP as fatty acyl donor, but not acyl-CoA. The protein is Phosphate acyltransferase of Lactococcus lactis subsp. lactis (strain IL1403) (Streptococcus lactis).